The sequence spans 233 residues: Protein lin-7 homolog A (233 aa).

Residues 14 to 28 (MATLTVVQPLTLDRD) carry the Kinase interacting site motif. One can recognise an L27 domain in the interval 25 to 80 (LDRDVARAIELLEKLQESGEVPVHKLQSLKKVLQSEFCTAIREVYQYMHETITVNG). Positions 108 to 190 (VVELPKTDEG…SVKLVVRYTP (83 aa)) constitute a PDZ domain. Residues 214-233 (LLIQQQQQQQQQQPQQNHMS) form a disordered region.

Belongs to the lin-7 family. Forms a complex with CASK and CASKIN1. Component of the brain-specific heterotrimeric complex (LIN-10-LIN-2-LIN-7 complex) composed of at least APBA1, CASK, and LIN7, which associates with the motor protein KIF17 to transport vesicles along microtubules. Can also interact with other modular proteins containing protein-protein interaction domains like PALS1, PALS2, MPP7, DLG1, DLG2 and DLG3 through its L27 domain. Interacts with DLG4, GRIN2B and MARCHF11 as well as CDH1 and CTNNB1, the channels KCNJ12/Kir2.2, KCNJ4/Kir2.3 and probably KCNJ2/Kir2.1 and SLC6A12/BGT-1 via its PDZ domain. The association of LIN7A with cadherin and beta-catenin is calcium-dependent, occurs at synaptic junctions and requires the actin cytoskeleton. Interacts with EGFR, ERBB2, ERBB3 and ERBB4 with both PDZ and KID domains. Associates with KIF17 via APBA1. Interacts with HTR4. Forms a tripartite complex composed of DLG1, MPP7 and LIN7 (LIN7A or LIN7C). As to expression, expressed in the kidney, along the length of the nephron.

The protein localises to the cell membrane. It is found in the basolateral cell membrane. The protein resides in the cell junction. Its subcellular location is the postsynaptic density membrane. It localises to the tight junction. Its function is as follows. Plays a role in establishing and maintaining the asymmetric distribution of channels and receptors at the plasma membrane of polarized cells. Forms membrane-associated multiprotein complexes that may regulate delivery and recycling of proteins to the correct membrane domains. The tripartite complex composed of LIN7 (LIN7A, LIN7B or LIN7C), CASK and APBA1 associates with the motor protein KIF17 to transport vesicles containing N-methyl-D-aspartate (NMDA) receptor subunit NR2B along microtubules. This complex may have the potential to couple synaptic vesicle exocytosis to cell adhesion in brain. Ensures the proper localization of GRIN2B (subunit 2B of the NMDA receptor) to neuronal postsynaptic density and may function in localizing synaptic vesicles at synapses where it is recruited by beta-catenin and cadherin. Required to localize Kir2 channels, GABA transporter (SLC6A12) and EGFR/ERBB1, ERBB2, ERBB3 and ERBB4 to the basolateral membrane of epithelial cells. The protein is Protein lin-7 homolog A (Lin7a) of Mus musculus (Mouse).